Here is a 511-residue protein sequence, read N- to C-terminus: V-type proton ATPase subunit B (511 aa).

Arginine 381 contributes to the ATP binding site. The segment at 484–511 (FYGRDREQDDDEEEEEDPDKSGDKLIDA) is disordered. The span at 491–501 (QDDDEEEEEDP) shows a compositional bias: acidic residues. Residues 502–511 (DKSGDKLIDA) are compositionally biased toward basic and acidic residues.

Belongs to the ATPase alpha/beta chains family. In terms of assembly, V-ATPase is a heteromultimeric enzyme composed of a peripheral catalytic V1 complex (components A to H) attached to an integral membrane V0 proton pore complex (components: a, c, c', c'', d, e, f and VOA1).

It localises to the vacuole membrane. Non-catalytic subunit of the V1 complex of vacuolar(H+)-ATPase (V-ATPase), a multisubunit enzyme composed of a peripheral complex (V1) that hydrolyzes ATP and a membrane integral complex (V0) that translocates protons. V-ATPase is responsible for acidifying and maintaining the pH of intracellular compartments. In Candida tropicalis (Yeast), this protein is V-type proton ATPase subunit B (VMA2).